The following is a 101-amino-acid chain: Interleukin-8 (101 aa).

An N-terminal signal peptide occupies residues 1–22 (MTSKLAVALLAAFVLSAALCEA). Residue Arg-27 is modified to Citrulline. 2 disulfides stabilise this stretch: Cys-34/Cys-61 and Cys-36/Cys-77.

The protein belongs to the intercrine alpha (chemokine CxC) family. As to quaternary structure, homodimer. Interacts with TNFAIP6 (via Link domain); this interaction interferes with chemokine binding to glycosaminoglycans. In terms of processing, citrullination at Arg-27 prevents proteolysis, and dampens tissue inflammation, it also enhances leukocytosis, possibly through impaired chemokine clearance from the blood circulation.

The protein resides in the secreted. Chemotactic factor that mediates inflammatory response by attracting neutrophils, basophils, and T-cells to clear pathogens and protect the host from infection. Also plays an important role in neutrophil activation. Released in response to an inflammatory stimulus, exerts its effect by binding to the G-protein-coupled receptors CXCR1 and CXCR2, primarily found in neutrophils, monocytes and endothelial cells. G-protein heterotrimer (alpha, beta, gamma subunits) constitutively binds to CXCR1/CXCR2 receptor and activation by IL8 leads to beta and gamma subunits release from Galpha (GNAI2 in neutrophils) and activation of several downstream signaling pathways including PI3K and MAPK pathways. This chain is Interleukin-8 (CXCL8), found in Canis lupus familiaris (Dog).